A 443-amino-acid chain; its full sequence is Probable D-serine dehydratase (443 aa).

At Lys116 the chain carries N6-(pyridoxal phosphate)lysine.

This sequence belongs to the serine/threonine dehydratase family. DsdA subfamily. It depends on pyridoxal 5'-phosphate as a cofactor.

The catalysed reaction is D-serine = pyruvate + NH4(+). The chain is Probable D-serine dehydratase from Bacillus cereus (strain B4264).